Consider the following 179-residue polypeptide: UPF0200 protein TV0279 (179 aa).

ATP is bound at residue 6–13 (GMPGAGKD).

Belongs to the UPF0200 family.

The protein is UPF0200 protein TV0279 of Thermoplasma volcanium (strain ATCC 51530 / DSM 4299 / JCM 9571 / NBRC 15438 / GSS1).